A 134-amino-acid chain; its full sequence is Putative pre-16S rRNA nuclease (134 aa).

It belongs to the YqgF nuclease family.

The protein resides in the cytoplasm. In terms of biological role, could be a nuclease involved in processing of the 5'-end of pre-16S rRNA. The protein is Putative pre-16S rRNA nuclease of Helicobacter pylori (strain P12).